Here is a 107-residue protein sequence, read N- to C-terminus: MMKVLVVFALLVTLISYSSSEGIDDLEADELLSLMANEQTRKECIPKHHECTSNKHGCCRGNFFKYKCQCTTVVTQDGEQTERCFCGTPPHHKAAELMVGFGKKIFG.

An N-terminal signal peptide occupies residues 1-20; that stretch reads MMKVLVVFALLVTLISYSSS. A propeptide spanning residues 21–41 is cleaved from the precursor; sequence EGIDDLEADELLSLMANEQTR. 4 disulfide bridges follow: C44–C59, C51–C68, C58–C86, and C70–C84.

The protein belongs to the neurotoxin 19 (CSTX) family. 04 (U1-Lctx) subfamily. As to expression, expressed by the venom gland.

The protein localises to the secreted. The sequence is that of U1-lycotoxin-Ls1e from Lycosa singoriensis (Wolf spider).